A 291-amino-acid chain; its full sequence is Insulin-like growth factor-binding protein 3 (291 aa).

The first 27 residues, 1–27 (MQRARPTLWAAALTLLVLLRGPPVARA), serve as a signal peptide directing secretion. The tract at residues 28 to 134 (GASSAGLGPV…AYLLPAPPAP (107 aa)) is IGF-binding. One can recognise an IGFBP N-terminal domain in the interval 36–117 (PVVRCEPCDA…LDGRGLCVNA (82 aa)). Intrachain disulfides connect cysteine 40–cysteine 67, cysteine 43–cysteine 69, cysteine 51–cysteine 70, cysteine 58–cysteine 73, cysteine 81–cysteine 94, and cysteine 88–cysteine 114. N-linked (GlcNAc...) (complex) asparagine glycans are attached at residues asparagine 116 and asparagine 136. Disordered stretches follow at residues 130–162 (APPA…RVSD) and 189–211 (DYES…TEYG). Residues 146-156 (AGSVESPSVSS) show a composition bias toward low complexity. A Phosphoserine; by FAM20C modification is found at serine 148. Residues 191 to 202 (ESQSTDTQNFSS) show a composition bias toward polar residues. Phosphoserine; by CK2 is present on serine 194. A glycan (N-linked (GlcNAc...) (complex) asparagine) is linked at asparagine 199. Serine 201 carries the phosphoserine; by FAM20C modification. Serine 202 is modified (phosphoserine; by CK2). Residues 210–285 (YGPCRREMED…TTKGKEDVHC (76 aa)) enclose the Thyroglobulin type-1 domain. Cystine bridges form between cysteine 213–cysteine 240, cysteine 251–cysteine 262, and cysteine 264–cysteine 285.

Interacts with XLKD1. Binds IGF2 more than IGF1. Forms a ternary complex of about 140 to 150 kDa with IGF1 or IGF2 and a 85 kDa glycoprotein (ALS). Interacts with humanin; humanin competes with importin KPNB1 for binding to IGFBP3, blocking IGFBP3 nuclear import and IGFBP3-mediated apoptosis. Interacts with TMEM219. Interacts with RXRA; this interaction modulates the transcriptional activity of RXRA. Interacts with LRP1; this interaction mediates cell growth inhibition independent of IGF1. In terms of processing, phosphorylated by FAM20C in the extracellular medium. Phosphorylated by CK2; resulting in decreased nuclear localization. Expressed by most tissues. Present in plasma.

Its subcellular location is the secreted. It localises to the nucleus. In terms of biological role, multifunctional protein that plays a critical role in regulating the availability of IGFs such as IGF1 and IGF2 to their receptors and thereby regulates IGF-mediated cellular processes including proliferation, differentiation, and apoptosis in a cell-type specific manner. Also exhibits IGF-independent antiproliferative and apoptotic effects mediated by its receptor TMEM219/IGFBP-3R. Inhibits the positive effect of humanin on insulin sensitivity. Promotes testicular germ cell apoptosis. Acts via LRP-1/alpha2M receptor, also known as TGF-beta type V receptor, to mediate cell growth inhibition independent of IGF1. Mechanistically, induces serine-specific dephosphorylation of IRS1 or IRS2 upon ligation to its receptor, leading to the inhibitory cascade. In the nucleus, interacts with transcription factors such as retinoid X receptor-alpha/RXRA to regulate transcriptional signaling and apoptosis. This is Insulin-like growth factor-binding protein 3 (IGFBP3) from Homo sapiens (Human).